A 535-amino-acid chain; its full sequence is Secreted lipase 5 (535 aa).

The signal sequence occupies residues 1–17 (MHLKSLLLAALPLLLEA). 2 N-linked (GlcNAc...) asparagine glycosylation sites follow: Asn32 and Asn119. The active-site Acyl-ester intermediate is Ser241. 4 N-linked (GlcNAc...) asparagine glycosylation sites follow: Asn282, Asn341, Asn347, and Asn432.

Belongs to the type-B carboxylesterase/lipase family.

The protein localises to the secreted. It catalyses the reaction a carboxylic ester + H2O = an alcohol + a carboxylate + H(+). Functionally, secreted lipase involved in plant virulence. Has a substrate preference for p-nitrophenyl esters with a carbon chain length of C8 (p-nitrophenyl caprylate). The chain is Secreted lipase 5 from Gibberella zeae (strain ATCC MYA-4620 / CBS 123657 / FGSC 9075 / NRRL 31084 / PH-1) (Wheat head blight fungus).